The primary structure comprises 935 residues: LPS-assembly protein LptD (935 aa).

Residues 1 to 33 (MALKSPAFRRKFPLLVTGGLLALQPLATSYVVA) form the signal peptide. The segment at 52–85 (KTPVNNLPPRPVHEGAAVSSGTEAAGEAETADRP) is disordered. Low complexity predominate over residues 65–79 (EGAAVSSGTEAAGEA).

Belongs to the LptD family. Component of the lipopolysaccharide transport and assembly complex. Interacts with LptE and LptA.

It localises to the cell outer membrane. Its function is as follows. Together with LptE, is involved in the assembly of lipopolysaccharide (LPS) at the surface of the outer membrane. The polypeptide is LPS-assembly protein LptD (Pseudomonas putida (strain ATCC 700007 / DSM 6899 / JCM 31910 / BCRC 17059 / LMG 24140 / F1)).